We begin with the raw amino-acid sequence, 285 residues long: Neuralized-like protein 2 (285 aa).

Residues 1–20 form a disordered region; it reads MAAASEPVDSGALWGLERPE. The NHR domain occupies 23–244; sequence PTRFHRVHGA…STKSVRLVQL (222 aa). Residues 250–285 form the SOCS box domain; the sequence is SLQTLCRLVIQRSMVHRLAIDGLHLPKELKDFCKYE.

As to quaternary structure, probable component the ECS(NEURL2) E3 ubiquitin-protein ligase complex consisting of ELOB/Elongin B, ELOC/Elongin C, CUL5, RBX1 and NEURL2. Interacts with CTNNB1. Expressed specifically in skeletal and cardiac muscles.

The protein localises to the cytoplasm. The protein operates within protein modification; protein ubiquitination. Its function is as follows. Plays an important role in the process of myofiber differentiation and maturation. Probable substrate-recognition component of a SCF-like ECS (Elongin BC-CUL2/5-SOCS-box protein) E3 ubiquitin-protein ligase complex, which mediates the ubiquitination of proteins. Probably contributes to catalysis through recognition and positioning of the substrate and the ubiquitin-conjugating enzyme. During myogenesis, controls the ubiquitination and degradation of the specific pool of CTNNB1/beta-catenin located at the sarcolemma. This chain is Neuralized-like protein 2 (NEURL2), found in Homo sapiens (Human).